The primary structure comprises 528 residues: Linear primary-alkylsulfatase (528 aa).

The Zn(2+) site is built by His42, His44, Asp46, His47, Glu151, and Glu170. Sulfate-binding positions include Asn179–Arg184 and Arg189. A Zn(2+)-binding site is contributed by His213. Tyr275 contacts sulfate.

This sequence belongs to the metallo-beta-lactamase superfamily. Type III sulfatase family. Requires Zn(2+) as cofactor.

The catalysed reaction is a primary linear alkyl sulfate ester + H2O = a primary alcohol + sulfate + H(+). Alkylsulfatase that cleaves the widely used detergent sodium dodecyl sulfate (SDS), which allows the bacterium to use SDS as a sole carbon or sulfur source. The protein is Linear primary-alkylsulfatase of Pseudomonas sp. (strain ATCC 19151).